The primary structure comprises 374 residues: (R)-phenyllactyl-CoA dehydratase beta subunit (374 aa).

It belongs to the FldB/FldC dehydratase alpha/beta subunit family. As to quaternary structure, part of the heterotrimeric phenyllactate dehydratase complex FldABC, composed of (R)-phenyllactate CoA-transferase (FldA) and a heterodimeric (R)-phenyllactyl-CoA dehydratase (FldB and FldC). Requires [4Fe-4S] cluster as cofactor. No flavin could be detected in the FldABC complex, and the addition of FAD, FMN or riboflavin to the dehydratase do not increase enzymatic activity. serves as cofactor.

It carries out the reaction (R)-3-phenyllactoyl-CoA = (E)-cinnamoyl-CoA + H2O. The catalysed reaction is (R)-3-(4-hydroxyphenyl)lactoyl-CoA = (E)-4-coumaroyl-CoA + H2O. It catalyses the reaction (R)-3-(indol-3-yl)lactoyl-CoA = (E)-3-(indol-3-yl)acryloyl-CoA + H2O. Its pathway is amino-acid degradation; L-phenylalanine degradation. In terms of biological role, component of the phenyllactate dehydratase complex FldABC that is involved in the fermentation of L-phenylalanine via a Stickland reaction. This complex catalyzes the reversible syn-dehydration of (R)-phenyllactate to (E)-cinnamate in two steps, a CoA-transfer from cinnamoyl-CoA to phenyllactate, catalyzed by FldA, followed by the dehydration of phenyllactyl-CoA to cinnamoyl-CoA, catalyzed by FldB and FldC. Requires the activator FldI to initiate catalysis. This Clostridium sporogenes protein is (R)-phenyllactyl-CoA dehydratase beta subunit.